The following is a 324-amino-acid chain: Malate dehydrogenase (324 aa).

Residues 20 to 25 (GAGNVG) and Asp-44 each bind NAD(+). Arg-93 and Arg-99 together coordinate substrate. NAD(+)-binding positions include Asn-106 and 129–131 (VTN). Residues Asn-131 and Arg-162 each coordinate substrate. The active-site Proton acceptor is the His-186.

This sequence belongs to the LDH/MDH superfamily. MDH type 3 family.

The catalysed reaction is (S)-malate + NAD(+) = oxaloacetate + NADH + H(+). Catalyzes the reversible oxidation of malate to oxaloacetate. The polypeptide is Malate dehydrogenase (Synechocystis sp. (strain ATCC 27184 / PCC 6803 / Kazusa)).